We begin with the raw amino-acid sequence, 935 residues long: Lon protease homolog 2, peroxisomal (935 aa).

Positions leucine 12 to glycine 296 constitute a Lon N-terminal domain. Glycine 452–threonine 459 contacts ATP. A Lon proteolytic domain is found at glutamine 692–glycine 922. Catalysis depends on residues serine 789 and lysine 832. A Microbody targeting signal motif is present at residues alanine 933–isoleucine 935.

This sequence belongs to the peptidase S16 family.

It localises to the peroxisome matrix. It carries out the reaction Hydrolysis of proteins in presence of ATP.. In terms of biological role, ATP-dependent serine protease that mediates the selective degradation of misfolded and unassembled polypeptides in the peroxisomal matrix. Necessary for type 2 peroxisome targeting signal (PTS2)-containing protein processing and facilitates peroxisome matrix protein import. In Pichia angusta (Yeast), this protein is Lon protease homolog 2, peroxisomal (PLN).